Here is a 437-residue protein sequence, read N- to C-terminus: Xylose isomerase (437 aa).

Active-site residues include H101 and D104. 7 residues coordinate Mg(2+): E232, E268, H271, D296, D307, D309, and D339.

The protein belongs to the xylose isomerase family. In terms of assembly, homotetramer. Requires Mg(2+) as cofactor.

The protein localises to the cytoplasm. It carries out the reaction alpha-D-xylose = alpha-D-xylulofuranose. This is Xylose isomerase from Mannheimia succiniciproducens (strain KCTC 0769BP / MBEL55E).